The following is a 167-amino-acid chain: uncharacterized protein (167 aa).

A disordered region spans residues 140 to 167; sequence SSEEKKKKKKKKKEKSLHTEREKKKKKF. Residues 145–154 show a composition bias toward basic residues; sequence KKKKKKKKEK.

This is an uncharacterized protein from Saccharomyces cerevisiae (strain ATCC 204508 / S288c) (Baker's yeast).